A 137-amino-acid chain; its full sequence is Large ribosomal subunit protein uL16 (137 aa).

The protein belongs to the universal ribosomal protein uL16 family. In terms of assembly, part of the 50S ribosomal subunit.

In terms of biological role, binds 23S rRNA and is also seen to make contacts with the A and possibly P site tRNAs. In Rhodopseudomonas palustris (strain ATCC BAA-98 / CGA009), this protein is Large ribosomal subunit protein uL16.